A 270-amino-acid polypeptide reads, in one-letter code: 3-phenylpropionate-dihydrodiol/cinnamic acid-dihydrodiol dehydrogenase (270 aa).

10–34 (FITGGGSGLGLALVERFIEEGAQVA) provides a ligand contact to NAD(+). Residue S143 coordinates substrate. Y156 (proton acceptor) is an active-site residue.

This sequence belongs to the short-chain dehydrogenases/reductases (SDR) family.

It carries out the reaction 3-(cis-5,6-dihydroxycyclohexa-1,3-dien-1-yl)propanoate + NAD(+) = 3-(2,3-dihydroxyphenyl)propanoate + NADH + H(+). The enzyme catalyses (2E)-3-(cis-5,6-dihydroxycyclohexa-1,3-dien-1-yl)prop-2-enoate + NAD(+) = (2E)-3-(2,3-dihydroxyphenyl)prop-2-enoate + NADH + H(+). Its pathway is aromatic compound metabolism; 3-phenylpropanoate degradation. Converts 3-phenylpropionate-dihydrodiol (PP-dihydrodiol) and cinnamic acid-dihydrodiol (CI-dihydrodiol) into 3-(2,3-dihydroxylphenyl)propanoic acid (DHPP) and 2,3-dihydroxicinnamic acid (DHCI), respectively. This Shigella flexneri serotype 5b (strain 8401) protein is 3-phenylpropionate-dihydrodiol/cinnamic acid-dihydrodiol dehydrogenase.